The chain runs to 157 residues: Transcriptional repressor NrdR (157 aa).

Residues 3–34 (CPFCGFADTRVIDSRLGKEGNNIRRRRECSQC) fold into a zinc finger. The region spanning 49 to 139 (PLIIKKDARR…VYRQFKDINE (91 aa)) is the ATP-cone domain.

Belongs to the NrdR family. Zn(2+) serves as cofactor.

Its function is as follows. Negatively regulates transcription of bacterial ribonucleotide reductase nrd genes and operons by binding to NrdR-boxes. The polypeptide is Transcriptional repressor NrdR (Syntrophotalea carbinolica (strain DSM 2380 / NBRC 103641 / GraBd1) (Pelobacter carbinolicus)).